The sequence spans 94 residues: ESAT-6-like protein EsxL (94 aa).

This sequence belongs to the WXG100 family. ESAT-6 subfamily. Strongly interacts with EsxK to form a heterodimeric complex under reducing conditions.

It is found in the secreted. This chain is ESAT-6-like protein EsxL, found in Mycobacterium bovis (strain ATCC BAA-935 / AF2122/97).